Reading from the N-terminus, the 247-residue chain is OCIA domain-containing protein 1 (247 aa).

Residues 1–112 (MNGRADFREP…KKLENSPLGE (112 aa)) enclose the OCIA domain. Residues S108 and S116 each carry the phosphoserine modification. Positions 116–247 (SGELRRSLPP…VNKYGDTWDE (132 aa)) are disordered. Composition is skewed to polar residues over residues 136–146 (SNVSGQSSFGT) and 168–177 (ASMNESTPTG). Composition is skewed to basic and acidic residues over residues 192-210 (DSPKRKSVTYEELRNKNRE) and 218-240 (HKTDPSVRPMQERGPQKEVKVNK). Phosphoserine is present on residues S193 and S198.

This sequence belongs to the OCIAD1 family. As to quaternary structure, interacts with OCIAD2. Interacts with STAT3.

The protein resides in the endosome. Functionally, maintains stem cell potency. Increases STAT3 phosphorylation and controls ERK phosphorylation. May act as a scaffold, increasing STAT3 recruitment onto endosomes. The protein is OCIA domain-containing protein 1 of Rattus norvegicus (Rat).